The chain runs to 173 residues: uncharacterized protein (173 aa).

It belongs to the ycf73 family.

It localises to the plastid. Its subcellular location is the chloroplast. This is an uncharacterized protein from Saccharum hybrid (Sugarcane).